We begin with the raw amino-acid sequence, 377 residues long: Progesterone receptor (377 aa).

The segment at 1–15 (EASQSPQYSFESLPQ) is modulating, Pro-Rich. The nuclear receptor DNA-binding region spans 16–90 (KICLICGDEA…AGMVLGGRKF (75 aa)). 2 NR C4-type zinc fingers span residues 18–38 (CLIC…CGSC) and 54–78 (CAGR…LRKC). Position 127 is a phosphoserine (Ser-127). Residues 130-364 (QDLQLIPPLI…EFPEMMSEVI (235 aa)) enclose the NR LBD domain. Residues 138-377 (LINLLMSIEP…LPKILAGMVK (240 aa)) form an AF2; mediates transcriptional activation region.

The protein belongs to the nuclear hormone receptor family. NR3 subfamily. Interacts with CUEDC2, SMARD1 and with UNC45A. Interacts with PRMT2. Interacts with NCOA2 and NCOA1. Interacts with KLF9. Interacts with GTF2B. Palmitoylated by ZDHHC7 and ZDHHC21. Palmitoylation is required for plasma membrane targeting and for rapid intracellular signaling via ERK and AKT kinases and cAMP generation.

The protein resides in the nucleus. The steroid hormones and their receptors are involved in the regulation of eukaryotic gene expression and affect cellular proliferation and differentiation in target tissues. Transcriptional activator of several progesteron-dependent promoters in a variety of cell types. Involved in activation of SRC-dependent MAPK signaling on hormone stimulation. This chain is Progesterone receptor (PGR), found in Ovis aries (Sheep).